A 40-amino-acid chain; its full sequence is Large ribosomal subunit protein bL36 (40 aa).

It belongs to the bacterial ribosomal protein bL36 family.

This Corynebacterium urealyticum (strain ATCC 43042 / DSM 7109) protein is Large ribosomal subunit protein bL36.